The sequence spans 197 residues: Protein Hikeshi (197 aa).

Residues 18 to 55 (VAEDKFVFDLPDYENINHVVVFMLGTIPFPEGMGGSVY) are required for F-X-F-G repeats-nucleoporins recognition and nuclear import. The flexible linker region involved in nuclear import of HSP70 proteins stretch occupies residues 124 to 134 (QTPVGSAAVSS).

It belongs to the OPI10 family. In terms of assembly, forms an asymmetric homodimer; required for binding and nuclear import of HSP70 proteins. Interacts with ATP-bound HSP70 proteins. Interacts with NUP62 and NUP153 (via F-X-F-G repeats). Interacts with HSPA8. Expressed in the central white matter of newborn and adult brain, particularly in regions where oligodendrocytes are generated.

The protein localises to the cytoplasm. It localises to the cytosol. Its subcellular location is the nucleus. Acts as a specific nuclear import carrier for HSP70 proteins following heat-shock stress: acts by mediating the nucleoporin-dependent translocation of ATP-bound HSP70 proteins into the nucleus. HSP70 proteins import is required to protect cells from heat shock damages. Does not translocate ADP-bound HSP70 proteins into the nucleus. May also be indirectly required for organization and/or function of the secretory apparatus in Club cells in lung. This Mus musculus (Mouse) protein is Protein Hikeshi.